Consider the following 221-residue polypeptide: Flagellar L-ring protein 2 (221 aa).

The first 16 residues, methionine 1–glycine 16, serve as a signal peptide directing secretion. Cysteine 17 carries N-palmitoyl cysteine lipidation. A lipid anchor (S-diacylglycerol cysteine) is attached at cysteine 17.

This sequence belongs to the FlgH family. The basal body constitutes a major portion of the flagellar organelle and consists of four rings (L,P,S, and M) mounted on a central rod.

It is found in the cell outer membrane. Its subcellular location is the bacterial flagellum basal body. Assembles around the rod to form the L-ring and probably protects the motor/basal body from shearing forces during rotation. The polypeptide is Flagellar L-ring protein 2 (Yersinia pseudotuberculosis serotype I (strain IP32953)).